The chain runs to 664 residues: Intraflagellar transport protein 70A2 (664 aa).

TPR repeat units follow at residues aspartate 11 to serine 44, arginine 45 to leucine 78, proline 153 to glutamine 186, aspartate 188 to glutamine 220, glutamine 395 to isoleucine 423, proline 424 to histidine 456, and valine 458 to asparagine 491. Positions tyrosine 507–aspartate 534 form a coiled coil. A TPR 8 repeat occupies cysteine 543–lysine 576.

Belongs to the TTC30/dfy-1/fleer family. As to quaternary structure, interacts wit the IFT B complex component IFT52.

It localises to the cell projection. The protein localises to the cilium. Required for polyglutamylation of axonemal tubulin. Plays a role in anterograde intraflagellar transport (IFT), the process by which cilia precursors are transported from the base of the cilium to the site of their incorporation at the tip. The protein is Intraflagellar transport protein 70A2 (Ift70a2) of Rattus norvegicus (Rat).